Reading from the N-terminus, the 313-residue chain is Formimidoylglutamase (313 aa).

Residues histidine 130, aspartate 155, histidine 157, aspartate 159, aspartate 241, and aspartate 243 each contribute to the Mn(2+) site.

This sequence belongs to the arginase family. Mn(2+) is required as a cofactor.

It carries out the reaction N-formimidoyl-L-glutamate + H2O = formamide + L-glutamate. It functions in the pathway amino-acid degradation; L-histidine degradation into L-glutamate; L-glutamate from N-formimidoyl-L-glutamate (hydrolase route): step 1/1. Functionally, catalyzes the conversion of N-formimidoyl-L-glutamate to L-glutamate and formamide. This Salmonella schwarzengrund (strain CVM19633) protein is Formimidoylglutamase.